Consider the following 183-residue polypeptide: ADP-ribosylation factor-like protein 1 (183 aa).

G2 is lipidated: N-myristoyl glycine. GTP-binding positions include 25–32 (GLDGAGKT), 68–72 (DLGGQ), and 127–130 (NKQD).

The protein belongs to the small GTPase superfamily. Arf family. In terms of assembly, homodimer. Interacts with IMH1 (via GRIP domain); the interaction is dependent on GTP. Interacts with MON2.

The protein resides in the golgi apparatus. Functionally, recruits golgins such as IMH1 to the Golgi. Can bind and hydrolyze GTP. May be involved in trafficking events within the endosomal system. The sequence is that of ADP-ribosylation factor-like protein 1 (ARL1) from Saccharomyces cerevisiae (strain ATCC 204508 / S288c) (Baker's yeast).